The sequence spans 199 residues: MEKKTGTTTVGIRTKEGVVLAADTQASLDHMVETLNIRKILPITDRIAITTAGSVGDVQALARMLEAEARYYQFTWGRPMTAKAMAHLLSNILNENKWFPYMVQIIIGGYVEEPTLANLDPLGGLIFDDYTATGSGSPFAIAVLEDGFRKDMSLEEAKELAVRAVRTAGKRDVYTGDRKVQVVVISKDGMKEEFVEFKE.

Residues Met1–Gly6 constitute a propeptide, removed in mature form; by autocatalysis. Residue Thr7 is the Nucleophile of the active site.

It belongs to the peptidase T1B family. In terms of assembly, the 20S proteasome core is composed of 14 alpha and 14 beta subunits that assemble into four stacked heptameric rings, resulting in a barrel-shaped structure. The two inner rings, each composed of seven catalytic beta subunits, are sandwiched by two outer rings, each composed of seven alpha subunits. The catalytic chamber with the active sites is on the inside of the barrel. Has a gated structure, the ends of the cylinder being occluded by the N-termini of the alpha-subunits. Is capped at one or both ends by the proteasome regulatory ATPase, PAN.

The protein resides in the cytoplasm. It carries out the reaction Cleavage of peptide bonds with very broad specificity.. The formation of the proteasomal ATPase PAN-20S proteasome complex, via the docking of the C-termini of PAN into the intersubunit pockets in the alpha-rings, triggers opening of the gate for substrate entry. Interconversion between the open-gate and close-gate conformations leads to a dynamic regulation of the 20S proteasome proteolysis activity. In terms of biological role, component of the proteasome core, a large protease complex with broad specificity involved in protein degradation. The polypeptide is Proteasome subunit beta 2 (Thermococcus kodakarensis (strain ATCC BAA-918 / JCM 12380 / KOD1) (Pyrococcus kodakaraensis (strain KOD1))).